A 445-amino-acid chain; its full sequence is POU domain, class 5, transcription factor 1.2 (445 aa).

Polar residues-rich tracts occupy residues 76–88 (SANQ…QGNP) and 164–182 (IFTS…SLDN). 2 disordered regions span residues 76–116 (SANQ…PSLP) and 139–227 (TTVV…GEME). Residues 183-200 (SRCSSATSSSSGGTNVGT) are compositionally biased toward low complexity. Positions 218–292 (EEAPNSGEME…LLRSWLHEVE (75 aa)) constitute a POU-specific domain. The homeobox DNA-binding region spans 312-371 (KRKHRTSIENNVKCTLENYFMQCSKPSAQEIAQIARELNMEKDVVRVWFCNRRQKGKRQV).

This sequence belongs to the POU transcription factor family. Class-5 subfamily. As to quaternary structure, interacts with the transcription factors tcf7l1/tcf3 and vegt. As to expression, initially (stage 9) expressed in all regions of the embryo, becoming localized to the ventroposterior regions by early neurula stages. In adults, expressed at a low level in the brain.

Its subcellular location is the nucleus. Functionally, transcription factor that binds to the octamer motif (5'-ATTTGCAT-3'). Antagonizes the activity of nodal/activin signaling during gastrulation to suppress mesendoderm formation. The polypeptide is POU domain, class 5, transcription factor 1.2 (pou5f1.2) (Xenopus laevis (African clawed frog)).